Reading from the N-terminus, the 455-residue chain is Tubulin delta chain (455 aa).

Position 143–149 (143–149 (AGGTGSG)) interacts with GTP.

This sequence belongs to the tubulin family. In terms of assembly, found in a complex with TEDC1, TEDC2, TUBE1 and TUBD1. In terms of tissue distribution, highly expressed in testis.

It localises to the cell projection. It is found in the cilium. The protein localises to the cytoplasm. The protein resides in the cytoskeleton. Its subcellular location is the microtubule organizing center. It localises to the centrosome. It is found in the centriole. The protein localises to the nucleus. Its function is as follows. Acts as a positive regulator of hedgehog signaling and regulates ciliary function. The sequence is that of Tubulin delta chain (Tubd1) from Mus musculus (Mouse).